The primary structure comprises 881 residues: Leucine--tRNA ligase (881 aa).

The 'HIGH' region signature appears at 48-58 (PYPSGKLHMGH). The short motif at 638 to 642 (KMSKS) is the 'KMSKS' region element. Lysine 641 contributes to the ATP binding site.

This sequence belongs to the class-I aminoacyl-tRNA synthetase family.

The protein resides in the cytoplasm. It catalyses the reaction tRNA(Leu) + L-leucine + ATP = L-leucyl-tRNA(Leu) + AMP + diphosphate. This is Leucine--tRNA ligase from Herminiimonas arsenicoxydans.